The following is a 328-amino-acid chain: E3 ubiquitin-protein ligase SINA-like 5 (328 aa).

Positions 1-77 (MARSGGNDGH…GSPKSSQPVK (77 aa)) are disordered. 2 stretches are compositionally biased toward acidic residues: residues 10-20 (HEEELDPELFE) and 27-62 (GYEDGEFEEDEEEFEEEEEELEEEEDEEEEEEENVT). A compositionally biased stretch (polar residues) spans 63–77 (TDEQSGSPKSSQPVK). An RING-type; degenerate zinc finger spans residues 86–122 (CPTCCEPLKRPIYQCSNGHLACSSCCQKLNKKCSFCR). Positions 136 to 324 (VIEASIVPCP…MQICIAYGYK (189 aa)) are SBD. The SIAH-type; degenerate zinc finger occupies 139–197 (ASIVPCPNAKHGCKETTTYCNQSSHEKVCKFVRCSCPVSNCNYVSSYSNLKSHACSTAH). 8 residues coordinate Zn(2+): Cys-144, Cys-151, His-163, Cys-167, Cys-174, Cys-179, His-191, and His-197.

Belongs to the SINA (Seven in absentia) family.

The catalysed reaction is S-ubiquitinyl-[E2 ubiquitin-conjugating enzyme]-L-cysteine + [acceptor protein]-L-lysine = [E2 ubiquitin-conjugating enzyme]-L-cysteine + N(6)-ubiquitinyl-[acceptor protein]-L-lysine.. It functions in the pathway protein modification; protein ubiquitination. Functionally, E3 ubiquitin-protein ligase that mediates ubiquitination and subsequent proteasomal degradation of target proteins. E3 ubiquitin ligases accept ubiquitin from an E2 ubiquitin-conjugating enzyme in the form of a thioester and then directly transfers the ubiquitin to targeted substrates. It probably triggers the ubiquitin-mediated degradation of different substrates. In Arabidopsis thaliana (Mouse-ear cress), this protein is E3 ubiquitin-protein ligase SINA-like 5.